Reading from the N-terminus, the 916-residue chain is Protein O-GlcNAcase (916 aa).

The disordered stretch occupies residues 1-46; the sequence is MVQKESQAALEERESERNANPAAASGASLEQSVAPAPGEDNPSGAG. The 277-residue stretch at 60–336 folds into the GH84 domain; the sequence is FLCGVVEGFY…TLATWYKSNM (277 aa). The a protein site is built by glycine 67, lysine 98, and aspartate 174. The active-site Proton donor is aspartate 175. A protein contacts are provided by residues tyrosine 219, 278–280, aspartate 285, and asparagine 313; that span reads WDN. Phosphoserine is present on serine 364. A disordered region spans residues 443–465; sequence ALSGEPSVLTKEEEKKQPDEEPM. Over residues 452-461 the composition is skewed to basic and acidic residues; sequence TKEEEKKQPD.

It belongs to the glycosyl hydrolase 84 family. Monomer. Interacts with CLOCK. Proteolytically cleaved by caspase-3 during apoptosis. The fragments interact with each other; cleavage does not decrease enzyme activity.

The protein localises to the cytoplasm. It localises to the nucleus. The catalysed reaction is 3-O-(N-acetyl-beta-D-glucosaminyl)-L-seryl-[protein] + H2O = N-acetyl-D-glucosamine + L-seryl-[protein]. It catalyses the reaction 3-O-(N-acetyl-beta-D-glucosaminyl)-L-threonyl-[protein] + H2O = L-threonyl-[protein] + N-acetyl-D-glucosamine. Functionally, cleaves GlcNAc but not GalNAc from O-glycosylated proteins. Deglycosylates a large and diverse number of proteins, such as CRYAB, ELK1, GSDMD, LMNB1 and TAB1. Can use p-nitrophenyl-beta-GlcNAc and 4-methylumbelliferone-GlcNAc as substrates but not p-nitrophenyl-beta-GalNAc or p-nitrophenyl-alpha-GlcNAc (in vitro). Does not bind acetyl-CoA and does not have histone acetyltransferase activity. The polypeptide is Protein O-GlcNAcase (Mus musculus (Mouse)).